The following is a 326-amino-acid chain: 4-hydroxythreonine-4-phosphate dehydrogenase (326 aa).

Thr-132 contributes to the substrate binding site. Residues His-160, His-205, and His-260 each coordinate a divalent metal cation. 3 residues coordinate substrate: Lys-268, Asn-277, and Arg-286.

This sequence belongs to the PdxA family. As to quaternary structure, homodimer. It depends on Zn(2+) as a cofactor. Requires Mg(2+) as cofactor. The cofactor is Co(2+).

It localises to the cytoplasm. It catalyses the reaction 4-(phosphooxy)-L-threonine + NAD(+) = 3-amino-2-oxopropyl phosphate + CO2 + NADH. The protein operates within cofactor biosynthesis; pyridoxine 5'-phosphate biosynthesis; pyridoxine 5'-phosphate from D-erythrose 4-phosphate: step 4/5. Functionally, catalyzes the NAD(P)-dependent oxidation of 4-(phosphooxy)-L-threonine (HTP) into 2-amino-3-oxo-4-(phosphooxy)butyric acid which spontaneously decarboxylates to form 3-amino-2-oxopropyl phosphate (AHAP). In Stenotrophomonas maltophilia (strain K279a), this protein is 4-hydroxythreonine-4-phosphate dehydrogenase.